Consider the following 365-residue polypeptide: Probable G-protein coupled receptor 142 (365 aa).

Residues 1–66 lie on the Extracellular side of the membrane; the sequence is MHLNSNPNSY…WPESPERSPC (66 aa). A glycan (N-linked (GlcNAc...) asparagine) is linked at asparagine 44. The helical transmembrane segment at 67–87 threads the bilayer; it reads VAGIIPVIYYSVLLSLGLPVA. The Cytoplasmic segment spans residues 88 to 102; the sequence is LARLAARTRKPSYHY. Residues 103–123 traverse the membrane as a helical segment; sequence LLALTASDIVTQVIIVFVGFL. Over 124–140 the chain is Extracellular; it reads LQGAVLARQVPQAVVRT. The chain crosses the membrane as a helical span at residues 141-161; sequence ANILEFAANHASVWIAVLFTV. The Cytoplasmic portion of the chain corresponds to 162–185; that stretch reads DRYNALCRPLRHRATSSPGRTHRA. A helical transmembrane segment spans residues 186–206; it reads IAAVIGVTLLTGIPFYWWLDV. Residues 207 to 224 lie on the Extracellular side of the membrane; sequence WRDADPPSTMDKLLKWAH. The helical transmembrane segment at 225-245 threads the bilayer; sequence CLIVYFIPCNVFLVTNSAIIL. The Cytoplasmic portion of the chain corresponds to 246 to 264; it reads RLRKRGQRGLRPLVSKSTA. A helical membrane pass occupies residues 265 to 285; that stretch reads ILLGVTSLFALLWAPRIIVML. Over 286 to 304 the chain is Extracellular; sequence YHLYVAPVHRDWRVHLALD. A helical membrane pass occupies residues 305 to 325; it reads IANMLAMLNTEVNFGLYCFIS. Topologically, residues 326–365 are cytoplasmic; sequence KTFRATVRQVICDVHMACALKSQPKQTVVELMLKSVGTEL.

Belongs to the G-protein coupled receptor 1 family.

Its subcellular location is the cell membrane. Its function is as follows. Orphan receptor. The protein is Probable G-protein coupled receptor 142 (Gpr142) of Mus musculus (Mouse).